A 1327-amino-acid polypeptide reads, in one-letter code: Myb-like protein O (1327 aa).

The span at 131–142 shows a compositional bias: low complexity; it reads NNNINTTNNNNK. Disordered stretches follow at residues 131-153, 263-390, 504-668, and 717-770; these read NNNINTTNNNNKTNERQNNEESN, EEED…DESS, PPQQ…NHES, and KKKK…DNDD. Acidic residues predominate over residues 263–283; sequence EEEDDEDYIPPEEEEDDDEDN. Positions 322-353 are enriched in low complexity; the sequence is YNNTANNINNNNIGDESDNNNNNNNNINNNSN. Residues 356–374 are compositionally biased toward acidic residues; that stretch reads DDDDDDDDDNNDDDDDDND. Positions 511 to 532 are enriched in low complexity; sequence SSSSINSSNTMSSSSSSSSLSK. The span at 533–542 shows a compositional bias: basic residues; that stretch reads NKLKKKKKEE. Basic and acidic residues predominate over residues 543–554; it reads KRKEEKRKEEKR. Basic residues predominate over residues 555–577; that stretch reads KEKKRKKRQSITISKFKKNKKKT. The segment covering 585-606 has biased composition (acidic residues); it reads SESDSSSDDSDDSDFYYSDIEE. Gly residues predominate over residues 607–619; sequence GGGGNGNGSGSGV. A compositionally biased stretch (acidic residues) spans 624 to 633; the sequence is SDNEEGDSSS. 2 stretches are compositionally biased toward low complexity: residues 646-668 and 722-732; these read HTNNSNNSIENNNNNNNNNNHES and QSSSSSSSSTI. Residues 754–770 are compositionally biased toward acidic residues; sequence NDDEDDNNNNNEDDNDD. Positions 897–953 constitute an HTH myb-type domain; the sequence is NVKLNQLKFTGGEDLLLLMGVKRFGTFNWRIIQKRYFPNKTDDQLFHRYKNLLSHSS. The segment at residues 925 to 949 is a DNA-binding region (H-T-H motif); the sequence is WRIIQKRYFPNKTDDQLFHRYKNLL. Positions 959–1010 constitute a Myb-like 1 domain; it reads KQYLNGAKFTKEEEEKLDGAIKIHGLKWDIISRDYLHWKEPAMLKKFYEKRE. 2 stretches are compositionally biased toward low complexity: residues 1061–1118 and 1144–1160; these read NSTN…NENN and PIIENNSSTSTTRETSP. Disordered stretches follow at residues 1061 to 1122 and 1144 to 1168; these read NSTN…YEFG and PIIENNSSTSTTRETSPVQMNPCPI. Residues 1268 to 1316 enclose the Myb-like 2 domain; that stretch reads KWTREEDRIILITVKEKGTVDNEIWKSLSDTKIQDKTPDQIMYRYLQLL.

Its subcellular location is the nucleus. The polypeptide is Myb-like protein O (mybO) (Dictyostelium discoideum (Social amoeba)).